Reading from the N-terminus, the 364-residue chain is Solute carrier family 35 member C2 (364 aa).

The next 2 helical transmembrane spans lie at 14-34 (AALT…ITFY) and 42-62 (FHFP…FSAL). Asn102 carries N-linked (GlcNAc...) asparagine glycosylation. 7 helical membrane passes run 104-124 (SFLY…VLFI), 136-156 (LRAA…MFTY), 166-186 (FALV…TQIL), 202-222 (FHLQ…FEGL), 238-258 (LLLW…GLGF), 272-292 (LSIA…HLLG), and 295-315 (ISLL…LHVA). Phosphoserine is present on residues Ser335 and Ser336.

Belongs to the TPT transporter family. SLC35C subfamily.

It is found in the golgi apparatus. Its subcellular location is the cis-Golgi network membrane. It localises to the endoplasmic reticulum-Golgi intermediate compartment membrane. In terms of biological role, may play an important role in the cellular response to tissue hypoxia. May be either a GDP-fucose transporter that competes with SLC35C1 for GDP-fucose, or a factor that otherwise enhances the fucosylation of Notch and is required for optimal Notch signaling in mammalian cells. The polypeptide is Solute carrier family 35 member C2 (Slc35c2) (Mus musculus (Mouse)).